The primary structure comprises 143 residues: Putative mediator of RNA polymerase II transcription subunit 11 (143 aa).

A coiled-coil region spans residues I97–D143. A disordered region spans residues E109–D143. A compositionally biased stretch (basic and acidic residues) spans N111 to Q136.

Belongs to the Mediator complex subunit 11 family. As to quaternary structure, component of the Mediator complex.

The protein resides in the nucleus. Its function is as follows. Component of the Mediator complex, a coactivator involved in the regulated transcription of nearly all RNA polymerase II-dependent genes. Mediator functions as a bridge to convey information from gene-specific regulatory proteins to the basal RNA polymerase II transcription machinery. Mediator is recruited to promoters by direct interactions with regulatory proteins and serves as a scaffold for the assembly of a functional pre-initiation complex with RNA polymerase II and the general transcription factors. The protein is Putative mediator of RNA polymerase II transcription subunit 11 (med11) of Dictyostelium discoideum (Social amoeba).